The following is an 881-amino-acid chain: Alanine--tRNA ligase (881 aa).

It belongs to the class-II aminoacyl-tRNA synthetase family.

The protein resides in the cytoplasm. The catalysed reaction is tRNA(Ala) + L-alanine + ATP = L-alanyl-tRNA(Ala) + AMP + diphosphate. Functionally, catalyzes the attachment of alanine to tRNA(Ala) in a two-step reaction: alanine is first activated by ATP to form Ala-AMP and then transferred to the acceptor end of tRNA(Ala). Also edits incorrectly charged Ser-tRNA(Ala) and Gly-tRNA(Ala) via its editing domain. The protein is Alanine--tRNA ligase (alaS) of Lacticaseibacillus paracasei (strain ATCC 334 / BCRC 17002 / CCUG 31169 / CIP 107868 / KCTC 3260 / NRRL B-441) (Lactobacillus paracasei).